A 300-amino-acid polypeptide reads, in one-letter code: MAYQSQDIIRRSATNGLTPAPQARDFQEEVAKLIDVTTCIGCKACQVACSEWNDIRDTVGNNIGVYDNPNDLSAKSWTVMRFSEVEQNDKLEWLIRKDGCMHCSDPGCLKACPAEGAIIQYANGIVDFQSEQCIGCGYCIAGCPFDIPRLNPEDNRVYKCTLCVDRVVVGQEPACVKTCPTGAIHFGTKESMKTLASERVAELKTRGYDNAGLYDPAGVGGTHVMYVLHHADKPNLYHGLPENPEISETVKFWKGIWKPLAAVGFAATFAASIFHYVGVGPNRADEEENNLHEEKDEERK.

Residues 1-260 (MAYQSQDIIR…KFWKGIWKPL (260 aa)) are Cytoplasmic-facing. 4 4Fe-4S ferredoxin-type domains span residues 30–60 (VAKLIDVTTCIGCKACQVACSEWNDIRDTVG), 91–123 (LEWLIRKDGCMHCSDPGCLKACPAEGAIIQYAN), 124–153 (GIVDFQSEQCIGCGYCIAGCPFDIPRLNPE), and 158–189 (YKCTLCVDRVVVGQEPACVKTCPTGAIHFGTK). [4Fe-4S] cluster-binding residues include C39, C42, C45, C49, C100, C103, C108, C112, C133, C136, C139, C143, C160, C163, C175, and C179. A helical transmembrane segment spans residues 261–279 (AAVGFAATFAASIFHYVGV). Residues 280 to 300 (GPNRADEEENNLHEEKDEERK) lie on the Periplasmic side of the membrane.

As to quaternary structure, formate dehydrogenase is a membrane-bound complex, formed by subunits alpha, beta and gamma. Requires [4Fe-4S] cluster as cofactor.

The protein resides in the cell membrane. Allows to use formate as major electron donor during aerobic respiration. The beta chain is an electron transfer unit containing 4 cysteine clusters involved in the formation of iron-sulfur centers. Electrons are transferred from the gamma chain to the molybdenum cofactor of the alpha subunit. This chain is Formate dehydrogenase-O iron-sulfur subunit (fdoH), found in Escherichia coli (strain K12).